Consider the following 859-residue polypeptide: Nitrate reductase [NADPH] (859 aa).

Residue Cys137 coordinates Mo-molybdopterin. The Cytochrome b5 heme-binding domain occupies 502 to 578 (DVVIKYSEFE…LPSMHLGRLE (77 aa)). Residues His538 and His561 each coordinate heme. The FAD-binding FR-type domain maps to 602–713 (RKWHKITLAE…KGPVGEFEYV (112 aa)). FAD-binding positions include 655–658 (RAYT), 672–676 (LIKVY), Phe677, 687–689 (IMT), Ser737, and Thr740. Residue 829–838 (MLLVCGPPGM) coordinates NADP(+).

This sequence belongs to the nitrate reductase family. In terms of assembly, homodimer. Requires FAD as cofactor. The cofactor is heme. It depends on Mo-molybdopterin as a cofactor.

The enzyme catalyses nitrite + NADP(+) + H2O = nitrate + NADPH + H(+). Its function is as follows. Nitrate reductase is a key enzyme involved in the first step of nitrate assimilation in plants, fungi and bacteria. The sequence is that of Nitrate reductase [NADPH] (YNR1) from Pichia angusta (Yeast).